We begin with the raw amino-acid sequence, 76 residues long: Large ribosomal subunit protein uL30 (76 aa).

This sequence belongs to the universal ribosomal protein uL30 family. As to quaternary structure, part of the 50S ribosomal subunit.

The polypeptide is Large ribosomal subunit protein uL30 (Anaeromyxobacter dehalogenans (strain 2CP-1 / ATCC BAA-258)).